We begin with the raw amino-acid sequence, 182 residues long: Phospholipase A2 inhibitor gamma subunit A2 (182 aa).

8 cysteine pairs are disulfide-bonded: cysteine 3–cysteine 27, cysteine 6–cysteine 13, cysteine 20–cysteine 48, cysteine 54–cysteine 75, cysteine 76–cysteine 81, cysteine 99–cysteine 124, cysteine 117–cysteine 146, and cysteine 150–cysteine 172. N-linked (GlcNAc...) asparagine glycosylation is present at asparagine 157.

This sequence belongs to the CNF-like-inhibitor family. As to quaternary structure, heterodimer of subunit A and subunit B.

Its subcellular location is the secreted. In terms of biological role, phospholipase A2 (PA2) inhibitor. Inhibits the enzymatic activity of PA2 of Deinagkistrodon acutus. Also shows a wide anti-hemorrhage activities to D.acutus, Naja atra and Agkistrodon halys venom. The native protein is more potent than the recombinant one. The sequence is that of Phospholipase A2 inhibitor gamma subunit A2 from Trimerodytes annularis (Red-bellied annulate keelback).